Consider the following 200-residue polypeptide: Probable molybdenum cofactor guanylyltransferase (200 aa).

Residues leucine 9–glycine 11, lysine 21, aspartate 69, and aspartate 100 each bind GTP. Position 100 (aspartate 100) interacts with Mg(2+).

The protein belongs to the MobA family. It depends on Mg(2+) as a cofactor.

The protein localises to the cytoplasm. It carries out the reaction Mo-molybdopterin + GTP + H(+) = Mo-molybdopterin guanine dinucleotide + diphosphate. Transfers a GMP moiety from GTP to Mo-molybdopterin (Mo-MPT) cofactor (Moco or molybdenum cofactor) to form Mo-molybdopterin guanine dinucleotide (Mo-MGD) cofactor. This chain is Probable molybdenum cofactor guanylyltransferase, found in Bacillus cereus (strain ATCC 10987 / NRS 248).